The primary structure comprises 1368 residues: DNA-directed RNA polymerase subunit beta (1368 aa).

This sequence belongs to the RNA polymerase beta chain family. In terms of assembly, the RNAP catalytic core consists of 2 alpha, 1 beta, 1 beta' and 1 omega subunit. When a sigma factor is associated with the core the holoenzyme is formed, which can initiate transcription.

It catalyses the reaction RNA(n) + a ribonucleoside 5'-triphosphate = RNA(n+1) + diphosphate. Functionally, DNA-dependent RNA polymerase catalyzes the transcription of DNA into RNA using the four ribonucleoside triphosphates as substrates. The protein is DNA-directed RNA polymerase subunit beta of Syntrophotalea carbinolica (strain DSM 2380 / NBRC 103641 / GraBd1) (Pelobacter carbinolicus).